Consider the following 339-residue polypeptide: 4-hydroxy-2-oxovalerate aldolase (339 aa).

A Pyruvate carboxyltransferase domain is found at 7-257 (IRIMDTTLRD…QVGVDLYKIM (251 aa)). Residue 15 to 16 (RD) participates in substrate binding. Aspartate 16 lines the Mn(2+) pocket. Histidine 19 functions as the Proton acceptor in the catalytic mechanism. Serine 169 and histidine 196 together coordinate substrate. Mn(2+)-binding residues include histidine 196 and histidine 198. A substrate-binding site is contributed by tyrosine 286.

This sequence belongs to the 4-hydroxy-2-oxovalerate aldolase family.

It catalyses the reaction (S)-4-hydroxy-2-oxopentanoate = acetaldehyde + pyruvate. This Pelotomaculum thermopropionicum (strain DSM 13744 / JCM 10971 / SI) protein is 4-hydroxy-2-oxovalerate aldolase.